Here is a 251-residue protein sequence, read N- to C-terminus: Coproheme decarboxylase (251 aa).

Fe-coproporphyrin III-binding positions include R133, 147–151 (YPMSK), H174, Q187, and S225. Y147 is an active-site residue.

Belongs to the ChdC family. Type 1 subfamily. As to quaternary structure, homopentamer. Homohexamer in solution. Fe-coproporphyrin III is required as a cofactor.

The catalysed reaction is Fe-coproporphyrin III + 2 H2O2 + 2 H(+) = heme b + 2 CO2 + 4 H2O. The enzyme catalyses Fe-coproporphyrin III + H2O2 + H(+) = harderoheme III + CO2 + 2 H2O. It carries out the reaction harderoheme III + H2O2 + H(+) = heme b + CO2 + 2 H2O. It participates in porphyrin-containing compound metabolism; protoheme biosynthesis. Functionally, involved in coproporphyrin-dependent heme b biosynthesis. Catalyzes the decarboxylation of Fe-coproporphyrin III (coproheme) to heme b (protoheme IX), the last step of the pathway. The reaction occurs in a stepwise manner with a three-propionate intermediate. The polypeptide is Coproheme decarboxylase (Listeria monocytogenes serovar 1/2a (strain ATCC BAA-679 / EGD-e)).